The chain runs to 763 residues: MSELLSFALFLASVLIYAWKAGRNTWWFAATLTVLGLFVVLNITLFASDYFTGDGINDAVLYTLTNSLTGAGVSKYILPGIGIVLGLAAVFGALGWILRRRRHHPHHFGYSLLALLLALGSVDASPAFRQITELVKSQSRDGDPDFAAYYKEPSKTIPDPKLNLVYIYGESLERTYFDNEAFPDLTPELGALKNEGLDFSHTQQLPGTDYTIAGMVASQCGIPLFAPFEGNASASVSSFFPQNICLGDIMKNSGYQNYFVQGANLRFAGKDVFLKSHGFDHLYGSEELKSVVADPHYRNDWGFYDDTVLDEAWKKFEELSRSGQRFSLFTLTVDTHHPDGFISRTCNRKKYDFDGKPNQSFSAVSCSQENIATFINKIKASPWFKDTVIVVSSDHLAMNNTAWKYLNKQDRNNLFFVIRGDKPQQETLAVKRNTMDNGATVLDILGGDNYLGLGRSSLSGQSMSEIFLNIKEKTLAWKPDIIRLWKFPKEMKEFTIDQQKNMIAFSGSHFRLPLLLRVSDKRVEPLPESEYSAPLRFQLADFAPRDNFVWVDRCYKMAQLWAPELALSTDWCVSQGQLGGQQIVQHVDKAIWKGKTAFKDTVIDMARYKGNVDTLKIVDNDIRYKADSFIFNVAGAPEEVKQFSGISRPESWGRWSNAQLGDEVKIEYKHPLPKKFDLVITAKAYGNNASRPIPVRVGNEEQTLVLGNEVTTTTLHFDNPTDADTLVIVPPEPVSTNEGNILGHSPRKLGIGMVEIKVVEREG.

The next 4 membrane-spanning stretches (helical) occupy residues 1 to 21 (MSELLSFALFLASVLIYAWKA), 26 to 46 (WWFAATLTVLGLFVVLNITLF), 77 to 97 (ILPGIGIVLGLAAVFGALGWI), and 108 to 128 (FGYSLLALLLALGSVDASPAF).

This sequence belongs to the OpgB family.

The protein resides in the cell inner membrane. The catalysed reaction is a phosphatidylglycerol + a membrane-derived-oligosaccharide D-glucose = a 1,2-diacyl-sn-glycerol + a membrane-derived-oligosaccharide 6-(glycerophospho)-D-glucose.. It participates in glycan metabolism; osmoregulated periplasmic glucan (OPG) biosynthesis. In terms of biological role, transfers a phosphoglycerol residue from phosphatidylglycerol to the membrane-bound nascent glucan backbones. The polypeptide is Phosphoglycerol transferase I (Escherichia coli (strain UTI89 / UPEC)).